Consider the following 567-residue polypeptide: Urease subunit alpha 1 (567 aa).

The Urease domain occupies 128 to 567; the sequence is GAVDTHVHYI…LPLAQLYHLF (440 aa). The Ni(2+) site is built by His-133, His-135, and Lys-216. Lys-216 carries the post-translational modification N6-carboxylysine. Position 218 (His-218) interacts with substrate. Positions 245 and 271 each coordinate Ni(2+). His-319 functions as the Proton donor in the catalytic mechanism. Ni(2+) is bound at residue Asp-359.

The protein belongs to the metallo-dependent hydrolases superfamily. Urease alpha subunit family. As to quaternary structure, heterotrimer of UreA (gamma), UreB (beta) and UreC (alpha) subunits. Three heterotrimers associate to form the active enzyme. Requires Ni cation as cofactor. Post-translationally, carboxylation allows a single lysine to coordinate two nickel ions.

Its subcellular location is the cytoplasm. It catalyses the reaction urea + 2 H2O + H(+) = hydrogencarbonate + 2 NH4(+). The protein operates within nitrogen metabolism; urea degradation; CO(2) and NH(3) from urea (urease route): step 1/1. The polypeptide is Urease subunit alpha 1 (Psychrobacter cryohalolentis (strain ATCC BAA-1226 / DSM 17306 / VKM B-2378 / K5)).